We begin with the raw amino-acid sequence, 127 residues long: Fluoride-specific ion channel FluC (127 aa).

4 consecutive transmembrane segments (helical) span residues 7–27, 38–58, 70–90, and 102–122; these read VYVA…VAWV, GTLA…VYVV, LIMV…LEAW, and LAYI…GIAL. Residues G77 and T80 each contribute to the Na(+) site.

The protein belongs to the fluoride channel Fluc/FEX (TC 1.A.43) family.

Its subcellular location is the cell inner membrane. It carries out the reaction fluoride(in) = fluoride(out). With respect to regulation, na(+) is not transported, but it plays an essential structural role and its presence is essential for fluoride channel function. Its function is as follows. Fluoride-specific ion channel. Important for reducing fluoride concentration in the cell, thus reducing its toxicity. The chain is Fluoride-specific ion channel FluC from Hahella chejuensis (strain KCTC 2396).